A 372-amino-acid polypeptide reads, in one-letter code: Chorismate synthase (372 aa).

Residues Arg48 and Arg54 each contribute to the NADP(+) site. FMN contacts are provided by residues 125–127 (RSS), 238–239 (NA), Gly278, 293–297 (KPTSS), and Arg319.

Belongs to the chorismate synthase family. In terms of assembly, homotetramer. It depends on FMNH2 as a cofactor.

The catalysed reaction is 5-O-(1-carboxyvinyl)-3-phosphoshikimate = chorismate + phosphate. The protein operates within metabolic intermediate biosynthesis; chorismate biosynthesis; chorismate from D-erythrose 4-phosphate and phosphoenolpyruvate: step 7/7. Functionally, catalyzes the anti-1,4-elimination of the C-3 phosphate and the C-6 proR hydrogen from 5-enolpyruvylshikimate-3-phosphate (EPSP) to yield chorismate, which is the branch point compound that serves as the starting substrate for the three terminal pathways of aromatic amino acid biosynthesis. This reaction introduces a second double bond into the aromatic ring system. The protein is Chorismate synthase of Xylella fastidiosa (strain M23).